The chain runs to 1103 residues: Detocs histidine-protein kinase DtcA (1103 aa).

Position 758 is a phosphohistidine; by autocatalysis (H758). One copy of the TPR repeat lies at T818–E851.

Post-translationally, autophosphorylated.

It carries out the reaction ATP + protein L-histidine = ADP + protein N-phospho-L-histidine.. In terms of biological role, sensor-kinase member of the two-component regulatory system Detocs that confers resistance to bacteriophage. When the system (DtcA-DtcB-DtcC) is expressed in a susceptible E.coli (strain MG1655) it confers resistance to bacteriophages T2, T4, T5, T7, SECphi4, SECphi6 and SECphi27; the level of resistance varies, resistance to T2, T7 and SECphi4 is not very high. DtcA (this subunit) probably autophosphorylates upon sensing viral infection, and subsequently transfers the phosphate signal to DtcC which activates it, leading to an antiviral defense; DtcB may scavenge phosphorylation signals from accidental activation of DtcA. This chain is Detocs histidine-protein kinase DtcA, found in Enterobacter cloacae (strain JD6301).